The following is a 562-amino-acid chain: Protein wntless (562 aa).

Residues 1 to 13 (MSGTILENLSGRK) lie on the Cytoplasmic side of the membrane. Residues 14-34 (LSILVTTLLLCQVLCFLLGGL) traverse the membrane as a helical segment. The Lumenal segment spans residues 35–239 (YAPLPAGHVT…AIHQNGGFTQ (205 aa)). Residue Asn-58 is glycosylated (N-linked (GlcNAc...) asparagine). Residues 240–260 (IWLLLKTVLFPFVVGIMIWFW) traverse the membrane as a helical segment. At 261 to 270 (RRVHLLQRSP) the chain is on the cytoplasmic side. Residues 271 to 291 (ALLEYMLIYLGAALTFLNLPL) traverse the membrane as a helical segment. Residues 292–311 (EYLSLVFEMPYMLLLSDIRQ) lie on the Lumenal side of the membrane. The helical transmembrane segment at 312–332 (GIFYAMLLTFWLVFAGEHMLI) threads the bilayer. Topologically, residues 333 to 344 (QDAPNKSTIRSR) are cytoplasmic. Residues 345–365 (YWKHLSAVVVGCISLFVFDIC) traverse the membrane as a helical segment. Residues 366–390 (ERGVQLRNPFYSIWAMPLAAKMAMT) lie on the Lumenal side of the membrane. The helical transmembrane segment at 391–411 (FIVLAGVSAAIYFLFLCYMIW) threads the bilayer. Residues 412–441 (KVFRNIGDKRTSLPSMSQARRLHYESLIYR) are Cytoplasmic-facing. The chain crosses the membrane as a helical span at residues 442–462 (FKFLMLATIVCAALTVTGFIM). Over 463-482 (GQRAEGQWDWNDNVAIQPTS) the chain is Lumenal. Residues 483-503 (AFLTGVYGMWNIYIFALLILY) traverse the membrane as a helical segment. The Cytoplasmic segment spans residues 504 to 562 (APSHKQWPTMHHSDETTQSNENIVASAASEEIEFSHLPSDSNPSEISSLTSFTRKVAFD). The tract at residues 539–562 (HLPSDSNPSEISSLTSFTRKVAFD) is disordered. The span at 541-556 (PSDSNPSEISSLTSFT) shows a compositional bias: polar residues.

Belongs to the wntless family. Interacts with wg; in the Golgi. Interacts with Vps35, a component of the retromer complex; wls stability is regulated by Vps35.

Its subcellular location is the presynaptic cell membrane. It localises to the postsynaptic cell membrane. The protein localises to the cell membrane. It is found in the endoplasmic reticulum membrane. The protein resides in the endosome membrane. Its subcellular location is the golgi apparatus membrane. In terms of biological role, a segment polarity gene required for wingless (wg)-dependent patterning processes, acting in both wg-sending cells and wg-target cells. In non-neuronal cells wls directs wg secretion. The wls traffic loop encompasses the Golgi, the cell surface, an endocytic compartment and a retrograde route leading back to the Golgi, and involves clathrin-mediated endocytosis and the retromer complex (a conserved protein complex consisting of Vps35 and Vps26). In neuronal cells (the larval motorneuron NMJ), the wg signal moves across the synapse via the release of wls-containing exosome-like vesicles. Postsynaptic wls is required for the trafficking of fz2 through the fz2-interacting protein Grip. This is Protein wntless from Drosophila erecta (Fruit fly).